Here is a 349-residue protein sequence, read N- to C-terminus: Isopentenyl-diphosphate delta-isomerase (349 aa).

Position 6–7 (6–7 (RK)) interacts with substrate. FMN is bound by residues 62 to 64 (AMT), serine 93, and asparagine 122. Glutamine 152 contacts substrate. Glutamate 153 provides a ligand contact to Mg(2+). FMN is bound by residues lysine 184, threonine 214, 258–259 (GG), and 280–281 (AG).

This sequence belongs to the IPP isomerase type 2 family. In terms of assembly, homooctamer. Dimer of tetramers. It depends on FMN as a cofactor. The cofactor is NADPH. Mg(2+) is required as a cofactor.

The protein localises to the cytoplasm. It catalyses the reaction isopentenyl diphosphate = dimethylallyl diphosphate. Its function is as follows. Involved in the biosynthesis of isoprenoids. Catalyzes the 1,3-allylic rearrangement of the homoallylic substrate isopentenyl (IPP) to its allylic isomer, dimethylallyl diphosphate (DMAPP). The polypeptide is Isopentenyl-diphosphate delta-isomerase (Bacillus subtilis (strain 168)).